The following is a 72-amino-acid chain: MVLSKKTIMQSFALMIILSIVMSTTEAKTIGNPAMREDEPKGCPPGSPASCKMQPANPYKPGCEASQRCRGT.

An N-terminal signal peptide occupies residues 1–27 (MVLSKKTIMQSFALMIILSIVMSTTEA). 2 disulfide bridges follow: C43–C51 and C63–C69.

This sequence belongs to the plant rapid alkalinization factor (RALF) family.

It localises to the secreted. Its function is as follows. Cell signaling peptide that may regulate plant stress, growth, and development. Mediates a rapid alkalinization of extracellular space by mediating a transient increase in the cytoplasmic Ca(2+) concentration leading to a calcium-dependent signaling events through a cell surface receptor and a concomitant activation of some intracellular mitogen-activated protein kinases. This Arabidopsis thaliana (Mouse-ear cress) protein is Protein RALF-like 20 (RALFL20).